The chain runs to 313 residues: Dihydroorotate dehydrogenase B (NAD(+)), catalytic subunit (313 aa).

FMN-binding positions include serine 21 and 45-46 (KA). Substrate is bound by residues lysine 45 and 69–73 (NAIGL). FMN contacts are provided by asparagine 99 and asparagine 127. Asparagine 127 contacts substrate. Residue cysteine 130 is the Nucleophile of the active site. Residues lysine 165 and isoleucine 191 each contribute to the FMN site. 192-193 (NT) lines the substrate pocket. Residues glycine 217, 243-244 (GG), and 265-266 (GT) contribute to the FMN site.

The protein belongs to the dihydroorotate dehydrogenase family. Type 1 subfamily. In terms of assembly, heterotetramer of 2 PyrK and 2 PyrD type B subunits. FMN serves as cofactor.

It localises to the cytoplasm. The catalysed reaction is (S)-dihydroorotate + NAD(+) = orotate + NADH + H(+). Its pathway is pyrimidine metabolism; UMP biosynthesis via de novo pathway; orotate from (S)-dihydroorotate (NAD(+) route): step 1/1. In terms of biological role, catalyzes the conversion of dihydroorotate to orotate with NAD(+) as electron acceptor. The chain is Dihydroorotate dehydrogenase B (NAD(+)), catalytic subunit (pyrD) from Geobacillus sp. (strain WCH70).